Here is a 483-residue protein sequence, read N- to C-terminus: Aspartyl/glutamyl-tRNA(Asn/Gln) amidotransferase subunit B (483 aa).

This sequence belongs to the GatB/GatE family. GatB subfamily. In terms of assembly, heterotrimer of A, B and C subunits.

It carries out the reaction L-glutamyl-tRNA(Gln) + L-glutamine + ATP + H2O = L-glutaminyl-tRNA(Gln) + L-glutamate + ADP + phosphate + H(+). The enzyme catalyses L-aspartyl-tRNA(Asn) + L-glutamine + ATP + H2O = L-asparaginyl-tRNA(Asn) + L-glutamate + ADP + phosphate + 2 H(+). Its function is as follows. Allows the formation of correctly charged Asn-tRNA(Asn) or Gln-tRNA(Gln) through the transamidation of misacylated Asp-tRNA(Asn) or Glu-tRNA(Gln) in organisms which lack either or both of asparaginyl-tRNA or glutaminyl-tRNA synthetases. The reaction takes place in the presence of glutamine and ATP through an activated phospho-Asp-tRNA(Asn) or phospho-Glu-tRNA(Gln). This Granulibacter bethesdensis (strain ATCC BAA-1260 / CGDNIH1) protein is Aspartyl/glutamyl-tRNA(Asn/Gln) amidotransferase subunit B.